Reading from the N-terminus, the 129-residue chain is Cytochrome c' (129 aa).

Heme c is bound by residues arginine 12, glutamine 13, threonine 69, glutamate 70, cysteine 119, cysteine 122, and histidine 123.

Post-translationally, binds 1 heme c group covalently per subunit.

Functionally, cytochrome c' is the most widely occurring bacterial c-type cytochrome. Cytochromes c' are high-spin proteins and the heme has no sixth ligand. Their exact function is not known. This Rubrivivax gelatinosus (Rhodocyclus gelatinosus) protein is Cytochrome c'.